Reading from the N-terminus, the 358-residue chain is Secreted protein RBT4 (358 aa).

Positions 1 to 19 are cleaved as a signal peptide; that stretch reads MKFSQVATTAAIFAGLTTA. Composition is skewed to low complexity over residues 48–63, 153–174, and 189–200; these read VTGG…QSAA, TTEV…VATP, and AATTASGSSSGS. Disordered regions lie at residues 48–98 and 144–203; these read VTGG…DGGN and GFPS…SNDF. One can recognise an SCP domain in the interval 216–332; sequence LDAHNKKRAR…NWGLYVVCSY (117 aa).

It belongs to the CRISP family.

Its subcellular location is the secreted. Its function is as follows. Secreted protein that acts as a virulence factor during infections such as in posttraumatic corneal infections. Acts as an important antigen in patients with systemic candidiasis and plays a role in the protection against phagocyte attack. The polypeptide is Secreted protein RBT4 (RBT4) (Candida albicans (strain SC5314 / ATCC MYA-2876) (Yeast)).